Here is a 522-residue protein sequence, read N- to C-terminus: DNA damage-binding protein CMR1 (522 aa).

A disordered region spans residues 38-100 (AGVLEKSRAP…DNQLLKMGSP (63 aa)). Positions 54–63 (TTNTRATKSA) are enriched in polar residues. S64 carries the phosphoserine modification. The residue at position 69 (T69) is a Phosphothreonine. The segment covering 75–84 (LRGESADDVK) has biased composition (basic and acidic residues). 7 WD repeats span residues 183–224 (ITYE…LADS), 239–281 (LFTK…EVLT), 287–327 (DDSL…SEYN), 331–371 (LADK…KKPE), 388–427 (DSRLSVSAVSYSPTDGTLVCNGYDDTIRLFDVKSRDHLSA), 442–481 (GRWTSILKARFKPNKNVFAIANMKRAIDIYNSEGQQLAHL), and 482–521 (PTATVPAVISWHPLRNWIAGGNSSGKIFLFTDDSGTIKQE). A Phosphoserine modification is found at S224.

Belongs to the WD repeat DDB2/WDR76 family.

The protein localises to the cytoplasm. Its subcellular location is the nucleus. Its function is as follows. DNA-binding protein that binds to both single- and double-stranded DNA. Binds preferentially to UV-damaged DNA in vitro. May be involved in DNA-metabolic processes. This Saccharomyces cerevisiae (strain ATCC 204508 / S288c) (Baker's yeast) protein is DNA damage-binding protein CMR1.